Reading from the N-terminus, the 412-residue chain is uncharacterized protein (412 aa).

The region spanning 50–264 (EVDIRTAYIN…KSGRRIVIGD (215 aa)) is the Radical SAM core domain. [4Fe-4S] cluster-binding residues include cysteine 64, cysteine 68, and cysteine 71.

Belongs to the radical SAM superfamily. Anaerobic sulfatase-maturating enzyme family. Requires [4Fe-4S] cluster as cofactor.

This is an uncharacterized protein from Archaeoglobus fulgidus (strain ATCC 49558 / DSM 4304 / JCM 9628 / NBRC 100126 / VC-16).